A 432-amino-acid polypeptide reads, in one-letter code: Pachytene checkpoint protein 2 homolog (432 aa).

Residue methionine 1 is modified to N-acetylmethionine. Glycine 179 to threonine 186 serves as a coordination point for ATP.

Belongs to the AAA ATPase family. PCH2 subfamily. In terms of assembly, specifically interacts with the ligand binding domain of the thyroid receptor (TR). This interaction does not require the presence of thyroid hormone for its interaction. Interacts with proteasome subunit PSMA8; to participate in meiosis progression during spermatogenesis.

Its function is as follows. Plays a key role in chromosome recombination and chromosome structure development during meiosis. Required at early steps in meiotic recombination that leads to non-crossovers pathways. Also needed for efficient completion of homologous synapsis by influencing crossover distribution along the chromosomes affecting both crossovers and non-crossovers pathways. Also required for development of higher-order chromosome structures and is needed for synaptonemal-complex formation. In males, required for efficient synapsis of the sex chromosomes and for sex body formation. Promotes early steps of the DNA double-strand breaks (DSBs) repair process upstream of the assembly of RAD51 complexes. Required for depletion of HORMAD1 and HORMAD2 from synapsed chromosomes. The chain is Pachytene checkpoint protein 2 homolog (TRIP13) from Canis lupus familiaris (Dog).